The primary structure comprises 143 residues: Small ribosomal subunit protein uS11c (143 aa).

The protein belongs to the universal ribosomal protein uS11 family. Part of the 30S ribosomal subunit.

It localises to the plastid. It is found in the chloroplast. This chain is Small ribosomal subunit protein uS11c, found in Brachypodium distachyon (Purple false brome).